The chain runs to 119 residues: Large ribosomal subunit protein uL18 (119 aa).

This sequence belongs to the universal ribosomal protein uL18 family. Part of the 50S ribosomal subunit; part of the 5S rRNA/L5/L18/L25 subcomplex. Contacts the 5S and 23S rRNAs.

Its function is as follows. This is one of the proteins that bind and probably mediate the attachment of the 5S RNA into the large ribosomal subunit, where it forms part of the central protuberance. This Xylella fastidiosa (strain M23) protein is Large ribosomal subunit protein uL18.